The chain runs to 466 residues: Asparagine--tRNA ligase (466 aa).

This sequence belongs to the class-II aminoacyl-tRNA synthetase family. Homodimer.

Its subcellular location is the cytoplasm. It catalyses the reaction tRNA(Asn) + L-asparagine + ATP = L-asparaginyl-tRNA(Asn) + AMP + diphosphate + H(+). The polypeptide is Asparagine--tRNA ligase (Serratia proteamaculans (strain 568)).